We begin with the raw amino-acid sequence, 317 residues long: D-aminoacyl-tRNA deacylase (317 aa).

Belongs to the DtdA deacylase family. Zn(2+) serves as cofactor. Ubiquitous.

It localises to the nucleus. Its subcellular location is the cytoplasm. The catalysed reaction is a D-aminoacyl-tRNA + H2O = a tRNA + a D-alpha-amino acid + H(+). It catalyses the reaction glycyl-tRNA(Ala) + H2O = tRNA(Ala) + glycine + H(+). Hydrolyzes D-aminoacyl-tRNA into D-amino acid and free tRNA. Broad specificity toward the amino acid, but strict specificity toward the D-isomer. Seems to be required for ethanol tolerance. This is D-aminoacyl-tRNA deacylase (GEK1) from Arabidopsis thaliana (Mouse-ear cress).